Here is a 430-residue protein sequence, read N- to C-terminus: Leucoanthocyanidin dioxygenase (430 aa).

The region spanning 212 to 311 (LLLQMKINYY…RFSWAIFCEP (100 aa)) is the Fe2OG dioxygenase domain. Positions 236, 238, and 292 each coordinate Fe cation. Basic and acidic residues-rich tracts occupy residues 376 to 407 (KKDNQDAVAENKDIKEDEQCGPAEHKDIKEDG) and 415 to 430 (KVFKENNQDVAAEESK). Residues 376-430 (KKDNQDAVAENKDIKEDEQCGPAEHKDIKEDGQGAAAENKVFKENNQDVAAEESK) form a disordered region.

The protein belongs to the iron/ascorbate-dependent oxidoreductase family. Fe cation is required as a cofactor. L-ascorbate serves as cofactor. In terms of tissue distribution, predominantly expressed in corollas and at lower levels in anthers.

It catalyses the reaction a (2R,3S,4S)-leucoanthocyanidin + 2-oxoglutarate + O2 = a 4-H-anthocyanidin with a 3-hydroxy group + succinate + CO2 + 2 H2O. The protein operates within pigment biosynthesis; anthocyanin biosynthesis. Its function is as follows. Oxidation of leucoanthocyanidins into anthocyanidins. The polypeptide is Leucoanthocyanidin dioxygenase (ANT17) (Petunia hybrida (Petunia)).